We begin with the raw amino-acid sequence, 134 residues long: Probable glycine cleavage system H protein (134 aa).

Positions 29–110 (TVLVGITDYA…PYEAWIAKIK (82 aa)) constitute a Lipoyl-binding domain. Lys-70 bears the N6-lipoyllysine mark.

It belongs to the GcvH family. In terms of assembly, the glycine cleavage system is composed of four proteins: P, T, L and H. (R)-lipoate is required as a cofactor.

Functionally, the glycine cleavage system catalyzes the degradation of glycine. The H protein shuttles the methylamine group of glycine from the P protein to the T protein. The chain is Probable glycine cleavage system H protein from Pyrococcus furiosus (strain ATCC 43587 / DSM 3638 / JCM 8422 / Vc1).